Here is a 486-residue protein sequence, read N- to C-terminus: MPLSKVEHYLSYHTRLLLPHVLSLQSSHRVAYIFSLLSAVSTGFITLISLYSQPWQKHLNYSSWQINTIASMTNLGMYLTPPILGMIADSHGPITLSLLAIIGFIPSYSYLAYVFNHPELSLGGNGDSSFNLSIICFVFIGISTSALYFSALLTCTKLYPHTKLLSISLPTTCYGISSVVGSQLLRIKWFWSSNASSSSSNSDLNLGRVFQTFALVYVVIGLLAWIATSVVSLLHFNEEQDNQKRLDDQTDVEQSPLLERSNHVQEKFTQTMLRIFSDPVTYILAVSILLSLGPLEMFIANMGSLTNLLVQLDAPTLSTKLLSTYALSSTFTRLLTGIVADFFAKKKISIKWILLTFLSLGVCAQLFLLKMTSSASPWGLVPTGSLVGIVYGGLFTVYPTLVLLVWGERSFGTVYGSLLIAPAIGSMIFCMLYAKFYDSRCMSGGGDLRNPSCISAVYKYSSIAFVVSAVLSAVVFWKLKSRKLRI.

Over 1-29 the chain is Cytoplasmic; sequence MPLSKVEHYLSYHTRLLLPHVLSLQSSHR. Residues 30 to 50 traverse the membrane as a helical segment; it reads VAYIFSLLSAVSTGFITLISL. Residues 51–67 are Vacuolar-facing; it reads YSQPWQKHLNYSSWQIN. Asn-60 carries N-linked (GlcNAc...) asparagine glycosylation. A helical transmembrane segment spans residues 68–88; sequence TIASMTNLGMYLTPPILGMIA. Residues 89 to 93 lie on the Cytoplasmic side of the membrane; the sequence is DSHGP. The helical transmembrane segment at 94 to 114 threads the bilayer; that stretch reads ITLSLLAIIGFIPSYSYLAYV. The Vacuolar portion of the chain corresponds to 115-133; it reads FNHPELSLGGNGDSSFNLS. An N-linked (GlcNAc...) asparagine glycan is attached at Asn-131. The helical transmembrane segment at 134–154 threads the bilayer; sequence IICFVFIGISTSALYFSALLT. Over 155 to 163 the chain is Cytoplasmic; it reads CTKLYPHTK. Residues 164–184 traverse the membrane as a helical segment; the sequence is LLSISLPTTCYGISSVVGSQL. The Vacuolar segment spans residues 185–212; the sequence is LRIKWFWSSNASSSSSNSDLNLGRVFQT. N-linked (GlcNAc...) asparagine glycosylation occurs at Asn-194. Residues 213-233 traverse the membrane as a helical segment; the sequence is FALVYVVIGLLAWIATSVVSL. Residues 234-279 lie on the Cytoplasmic side of the membrane; the sequence is LHFNEEQDNQKRLDDQTDVEQSPLLERSNHVQEKFTQTMLRIFSDP. The residue at position 255 (Ser-255) is a Phosphoserine. A helical transmembrane segment spans residues 280 to 300; sequence VTYILAVSILLSLGPLEMFIA. Residues 301–320 lie on the Vacuolar side of the membrane; that stretch reads NMGSLTNLLVQLDAPTLSTK. A helical transmembrane segment spans residues 321 to 343; that stretch reads LLSTYALSSTFTRLLTGIVADFF. Over 344–347 the chain is Cytoplasmic; sequence AKKK. Residues 348–368 form a helical membrane-spanning segment; sequence ISIKWILLTFLSLGVCAQLFL. The Vacuolar portion of the chain corresponds to 369–385; sequence LKMTSSASPWGLVPTGS. The chain crosses the membrane as a helical span at residues 386–406; that stretch reads LVGIVYGGLFTVYPTLVLLVW. Over 407–413 the chain is Cytoplasmic; sequence GERSFGT. A helical transmembrane segment spans residues 414–434; sequence VYGSLLIAPAIGSMIFCMLYA. Residues 435–456 are Vacuolar-facing; it reads KFYDSRCMSGGGDLRNPSCISA. The helical transmembrane segment at 457-477 threads the bilayer; it reads VYKYSSIAFVVSAVLSAVVFW. The Cytoplasmic portion of the chain corresponds to 478 to 486; the sequence is KLKSRKLRI.

It belongs to the major facilitator superfamily.

Its subcellular location is the vacuole membrane. In terms of biological role, probable transporter. Does not act in the transport of monocarboxylic acids across the plasma membrane. This Saccharomyces cerevisiae (strain ATCC 204508 / S288c) (Baker's yeast) protein is Probable transporter MCH1 (MCH1).